Here is a 350-residue protein sequence, read N- to C-terminus: Biotin synthase (350 aa).

The Radical SAM core domain occupies 41–268; the sequence is NEVQISRLLS…KSRVRLSAGR (228 aa). Residues Cys56, Cys60, and Cys63 each coordinate [4Fe-4S] cluster. [2Fe-2S] cluster-binding residues include Cys100, Cys131, Cys191, and Arg263.

It belongs to the radical SAM superfamily. Biotin synthase family. As to quaternary structure, homodimer. It depends on [4Fe-4S] cluster as a cofactor. [2Fe-2S] cluster is required as a cofactor.

It carries out the reaction (4R,5S)-dethiobiotin + (sulfur carrier)-SH + 2 reduced [2Fe-2S]-[ferredoxin] + 2 S-adenosyl-L-methionine = (sulfur carrier)-H + biotin + 2 5'-deoxyadenosine + 2 L-methionine + 2 oxidized [2Fe-2S]-[ferredoxin]. Its pathway is cofactor biosynthesis; biotin biosynthesis; biotin from 7,8-diaminononanoate: step 2/2. Catalyzes the conversion of dethiobiotin (DTB) to biotin by the insertion of a sulfur atom into dethiobiotin via a radical-based mechanism. The polypeptide is Biotin synthase (Shewanella sp. (strain ANA-3)).